The primary structure comprises 359 residues: Phospho-N-acetylmuramoyl-pentapeptide-transferase (359 aa).

Topologically, residues 1–25 (MLYQLALLLKDYWFAFNVLKYITFR) are periplasmic. Residues 26–48 (SFTAVLIAFFLTLVLSPSFINRL) traverse the membrane as a helical segment. Over 49-74 (RKIQRLFGGYVREYTPESHEVKKYTP) the chain is Cytoplasmic. Muraymycin D2 contacts are provided by Lys70 and Thr75. A helical membrane pass occupies residues 75 to 92 (TMGGIVILIVVTLSTLLL). The Periplasmic portion of the chain corresponds to 93–98 (MRWDIK). The helical transmembrane segment at 99 to 120 (YTWVVLLSFLSFGTIGFWDDYV) threads the bilayer. The Cytoplasmic segment spans residues 121-130 (KLKNKKGISI). A helical transmembrane segment spans residues 131-152 (KTKFLLQVLSASLISVLIYYWA). The Periplasmic segment spans residues 153-172 (DIDTILYFPFFKELYVDLGV). A helical membrane pass occupies residues 173–194 (LYLPFAVFVIVGSANAVNLTDG). Muraymycin D2 contacts are provided by Asn190, Asp193, and Asp196. The Cytoplasmic portion of the chain corresponds to 195 to 197 (LDG). A helical membrane pass occupies residues 198 to 218 (LAIGPAMTTATALGVVAYAVG). Residues 219-233 (HSKIAQYLNIPYVPY) are Periplasmic-facing. The helical transmembrane segment at 234–255 (AGELTVFCFALVGAGLGFLWFN) threads the bilayer. The Cytoplasmic segment spans residues 256-264 (SFPAQMFMG). Positions 264 and 268 each coordinate muraymycin D2. Residues 265–280 (DVGSLSIGASLATVAL) traverse the membrane as a helical segment. Residues 281–284 (LTKS) lie on the Periplasmic side of the membrane. Residues 285 to 310 (EFIFAVAAGVFVFETISVILQIIYFR) traverse the membrane as a helical segment. 2 residues coordinate muraymycin D2: Gln305 and Ala321. At 311–332 (WTGGKRLFKRAPFHHHLELNGL) the chain is on the cytoplasmic side. The helical transmembrane segment at 333-355 (PEPKIVVRMWIISILLAIIAISM) threads the bilayer. Residues 356–359 (LKLR) lie on the Periplasmic side of the membrane.

Belongs to the glycosyltransferase 4 family. MraY subfamily. As to quaternary structure, homodimer. Mg(2+) is required as a cofactor. It depends on Mn(2+) as a cofactor.

The protein localises to the cell inner membrane. The enzyme catalyses UDP-N-acetyl-alpha-D-muramoyl-L-alanyl-gamma-D-glutamyl-meso-2,6-diaminopimeloyl-D-alanyl-D-alanine + di-trans,octa-cis-undecaprenyl phosphate = di-trans,octa-cis-undecaprenyl diphospho-N-acetyl-alpha-D-muramoyl-L-alanyl-D-glutamyl-meso-2,6-diaminopimeloyl-D-alanyl-D-alanine + UMP. Its pathway is cell wall biogenesis; peptidoglycan biosynthesis. Inhibited by natural nucleoside antibiotics including tunicamycin, capuramycin and muraymycin. Usually the cofactor magnesium is not required for antibiotic binding. In terms of biological role, catalyzes the initial step of the lipid cycle reactions in the biosynthesis of the cell wall peptidoglycan: transfers peptidoglycan precursor phospho-MurNAc-pentapeptide from UDP-MurNAc-pentapeptide onto the lipid carrier undecaprenyl phosphate, yielding undecaprenyl-pyrophosphoryl-MurNAc-pentapeptide, known as lipid I. This is Phospho-N-acetylmuramoyl-pentapeptide-transferase from Aquifex aeolicus (strain VF5).